Reading from the N-terminus, the 154-residue chain is S-ribosylhomocysteine lyase (154 aa).

3 residues coordinate Fe cation: histidine 58, histidine 62, and cysteine 125.

It belongs to the LuxS family. Homodimer. Fe cation is required as a cofactor.

The catalysed reaction is S-(5-deoxy-D-ribos-5-yl)-L-homocysteine = (S)-4,5-dihydroxypentane-2,3-dione + L-homocysteine. Involved in the synthesis of autoinducer 2 (AI-2) which is secreted by bacteria and is used to communicate both the cell density and the metabolic potential of the environment. The regulation of gene expression in response to changes in cell density is called quorum sensing. Catalyzes the transformation of S-ribosylhomocysteine (RHC) to homocysteine (HC) and 4,5-dihydroxy-2,3-pentadione (DPD). The polypeptide is S-ribosylhomocysteine lyase (Dichelobacter nodosus (strain VCS1703A)).